A 349-amino-acid chain; its full sequence is Anthranilate phosphoribosyltransferase (349 aa).

Residues G82, 85-86 (GD), 92-95 (NVST), 110-118 (KHGNRAVSG), and S122 contribute to the 5-phospho-alpha-D-ribose 1-diphosphate site. Position 82 (G82) interacts with anthranilate. Mg(2+) is bound at residue S94. N113 provides a ligand contact to anthranilate. Residue R168 participates in anthranilate binding. D227 and E228 together coordinate Mg(2+).

It belongs to the anthranilate phosphoribosyltransferase family. As to quaternary structure, homodimer. Mg(2+) is required as a cofactor.

It carries out the reaction N-(5-phospho-beta-D-ribosyl)anthranilate + diphosphate = 5-phospho-alpha-D-ribose 1-diphosphate + anthranilate. It participates in amino-acid biosynthesis; L-tryptophan biosynthesis; L-tryptophan from chorismate: step 2/5. In terms of biological role, catalyzes the transfer of the phosphoribosyl group of 5-phosphorylribose-1-pyrophosphate (PRPP) to anthranilate to yield N-(5'-phosphoribosyl)-anthranilate (PRA). This chain is Anthranilate phosphoribosyltransferase, found in Pseudomonas putida (strain ATCC 700007 / DSM 6899 / JCM 31910 / BCRC 17059 / LMG 24140 / F1).